A 270-amino-acid chain; its full sequence is Phosphate import ATP-binding protein PstB 1 (270 aa).

The 242-residue stretch at 24 to 265 (LAVERLNLFY…PYQRQTEDYI (242 aa)) folds into the ABC transporter domain. ATP is bound at residue 56–63 (GPSGCGKS).

This sequence belongs to the ABC transporter superfamily. Phosphate importer (TC 3.A.1.7) family. The complex is composed of two ATP-binding proteins (PstB), two transmembrane proteins (PstC and PstA) and a solute-binding protein (PstS).

The protein localises to the cell inner membrane. The enzyme catalyses phosphate(out) + ATP + H2O = ADP + 2 phosphate(in) + H(+). Functionally, part of the ABC transporter complex PstSACB involved in phosphate import. Responsible for energy coupling to the transport system. The protein is Phosphate import ATP-binding protein PstB 1 of Yersinia pestis bv. Antiqua (strain Antiqua).